The following is a 130-amino-acid chain: Small ribosomal subunit protein uS9 (130 aa).

The protein belongs to the universal ribosomal protein uS9 family.

This Teredinibacter turnerae (strain ATCC 39867 / T7901) protein is Small ribosomal subunit protein uS9.